Consider the following 264-residue polypeptide: Thymidylate synthase (264 aa).

Position 21 (Arg21) interacts with dUMP. His51 is a (6R)-5,10-methylene-5,6,7,8-tetrahydrofolate binding site. Position 126-127 (126-127 (RR)) interacts with dUMP. Residue Cys146 is the Nucleophile of the active site. Residues 166–169 (RSAD), Asn177, and 207–209 (HLY) each bind dUMP. Asp169 provides a ligand contact to (6R)-5,10-methylene-5,6,7,8-tetrahydrofolate. (6R)-5,10-methylene-5,6,7,8-tetrahydrofolate is bound at residue Ala263.

Belongs to the thymidylate synthase family. Bacterial-type ThyA subfamily. As to quaternary structure, homodimer.

Its subcellular location is the cytoplasm. The enzyme catalyses dUMP + (6R)-5,10-methylene-5,6,7,8-tetrahydrofolate = 7,8-dihydrofolate + dTMP. Its pathway is pyrimidine metabolism; dTTP biosynthesis. Its function is as follows. Catalyzes the reductive methylation of 2'-deoxyuridine-5'-monophosphate (dUMP) to 2'-deoxythymidine-5'-monophosphate (dTMP) while utilizing 5,10-methylenetetrahydrofolate (mTHF) as the methyl donor and reductant in the reaction, yielding dihydrofolate (DHF) as a by-product. This enzymatic reaction provides an intracellular de novo source of dTMP, an essential precursor for DNA biosynthesis. This Nitrosomonas eutropha (strain DSM 101675 / C91 / Nm57) protein is Thymidylate synthase.